An 837-amino-acid polypeptide reads, in one-letter code: MEPAAGGPGPLIVNNKQPQPPPPPPPATAQPPPGAPRAGAGLLPGGKAREFNRNQRKDSEGYSESPDLEFEYADTDKWAAELSELYSYTEGPEFLMNRKCFEEDFRIHVTDKKWTELDTNQHRTHAMRLLDGLEVTAREKRLKVARAILYVAQGTFGECSSEAEVQSWMRYNIFLLLEVGTFNALVELLNMEIDNSAACSSAVRKPAISLADSTDLRVLLNIMYLIVETVHQECEGDKAEWRTMRQTFRAELGSPLYNSEPFAIMLFGMVTKFCSGHAPHFPMKKVLLLLWKTVLCTLGGFEELQSMKAEKRSILGLPPLPEDSIKVIRNMRAASPPASASDLIEQQQKRGRREHKALIKQDNLDAFNERDPYKADDSREEEEENDDDNSLEGETFPLERDEVMPPPLQHPQTDRLTCPKGLPWAPKVREKDIEMFLESSRSKFIGYTLGSDTNTVVGLPRPIHESIKTLKQHKYTSIAEVQAQMEEEYLRSPLSGGEEEVEQVPAETLYQGLLPSLPQYMIALLKILLAAAPTSKAKTDSINILADVLPEEMPTTVLQSMKLGVDVNRHKEVIVKAISAVLLLLLKHFKLNHVYQFEYMAQHLVFANCIPLILKFFNQNIMSYITAKNSISVLDYPHCVVHELPELTAESLEAGDSNQFCWRNLFSCINLLRILNKLTKWKHSRTMMLVVFKSAPILKRALKVKQAMMQLYVLKLLKVQTKYLGRQWRKSNMKTMSAIYQKVRHRLNDDWAYGNDLDARPWDFQAEECALRANIERFNARRYDRAHSNPDFLPVDNCLQSVLGQRVDLPEDFQMNYDLWLEREVFSKPISWEELLQ.

Residue Met-1 is modified to N-acetylmethionine. Disordered stretches follow at residues 1 to 66 (MEPA…SESP) and 333 to 423 (AASP…KGLP). Residues 18-35 (PQPPPPPPPATAQPPPGA) show a composition bias toward pro residues. The span at 47–60 (KAREFNRNQRKDSE) shows a compositional bias: basic and acidic residues. Residues Ser-59, Ser-335, and Ser-339 each carry the phosphoserine modification. Positions 356-377 (KALIKQDNLDAFNERDPYKADD) are enriched in basic and acidic residues. The span at 378–391 (SREEEEENDDDNSL) shows a compositional bias: acidic residues. The residue at position 788 (Ser-788) is a Phosphoserine. Positions 796–837 (DNCLQSVLGQRVDLPEDFQMNYDLWLEREVFSKPISWEELLQ) are required for STRIPAK core complex formation.

Belongs to the STRIP family. As to quaternary structure, part of the core of STRIPAK complexes composed of PP2A catalytic and scaffolding subunits, the striatins (PP2A regulatory subunits), the striatin-associated proteins MOB4, STRIP1 and STRIP2, PDCD10 and members of the STE20 kinases, such as STK24 and STK26. The STRIPAK complex can be extended by adapter proteins such as SLMAP:SIKE1, CTTNBP2 or CTTNBP2NL. Interacts with CDC42BPB. Interacts with CTTNBP2NL.

It is found in the cytoplasm. Functionally, plays a role in the regulation of cell morphology and cytoskeletal organization. Required in the cortical actin filament dynamics and cell shape. Part of the striatin-interacting phosphatase and kinase (STRIPAK) complexes. STRIPAK complexes have critical roles in protein (de)phosphorylation and are regulators of multiple signaling pathways including Hippo, MAPK, nuclear receptor and cytoskeleton remodeling. Different types of STRIPAK complexes are involved in a variety of biological processes such as cell growth, differentiation, apoptosis, metabolism and immune regulation. The protein is Striatin-interacting protein 1 (STRIP1) of Macaca fascicularis (Crab-eating macaque).